Here is a 134-residue protein sequence, read N- to C-terminus: Cell division protein SepF 1 (134 aa).

Belongs to the SepF family. Homodimer. Interacts with FtsZ.

The protein localises to the cytoplasm. Its function is as follows. Cell division protein that is part of the divisome complex and is recruited early to the Z-ring. Probably stimulates Z-ring formation, perhaps through the cross-linking of FtsZ protofilaments. Its function overlaps with FtsA. In Streptomyces avermitilis (strain ATCC 31267 / DSM 46492 / JCM 5070 / NBRC 14893 / NCIMB 12804 / NRRL 8165 / MA-4680), this protein is Cell division protein SepF 1.